Reading from the N-terminus, the 420-residue chain is Exodeoxyribonuclease 7 large subunit (420 aa).

This sequence belongs to the XseA family. In terms of assembly, heterooligomer composed of large and small subunits.

It localises to the cytoplasm. The enzyme catalyses Exonucleolytic cleavage in either 5'- to 3'- or 3'- to 5'-direction to yield nucleoside 5'-phosphates.. Functionally, bidirectionally degrades single-stranded DNA into large acid-insoluble oligonucleotides, which are then degraded further into small acid-soluble oligonucleotides. The protein is Exodeoxyribonuclease 7 large subunit of Helicobacter pylori (strain Shi470).